A 107-amino-acid chain; its full sequence is U20-lycotoxin-Ls1b (107 aa).

Positions 1–30 (MFSTSDQVSKMNSRILSALLILGIATCVIA) are cleaved as a signal peptide. One can recognise a WAP domain in the interval 31–76 (GGFCPKSRHPQCNLSYKINDCCAQSDCRVGSVCCVEGCGNVCRAES). Disulfide bonds link Cys-34-Cys-64, Cys-42-Cys-68, Cys-51-Cys-63, Cys-52-Cys-90, and Cys-57-Cys-72.

This sequence belongs to the venom protein 11 family. 02 (wap-2) subfamily. In terms of processing, contains 5 disulfide bonds. In terms of tissue distribution, expressed by the venom gland.

The protein resides in the secreted. Its function is as follows. Has antibacterial activity. This Lycosa singoriensis (Wolf spider) protein is U20-lycotoxin-Ls1b.